The chain runs to 194 residues: dCTP deaminase (194 aa).

DCTP-binding positions include arginine 110–arginine 115, aspartate 128, valine 136–glutamate 138, tyrosine 171, lysine 178, and glutamine 182. The Proton donor/acceptor role is filled by glutamate 138.

Belongs to the dCTP deaminase family. As to quaternary structure, homotrimer.

The catalysed reaction is dCTP + H2O + H(+) = dUTP + NH4(+). It participates in pyrimidine metabolism; dUMP biosynthesis; dUMP from dCTP (dUTP route): step 1/2. Catalyzes the deamination of dCTP to dUTP. The polypeptide is dCTP deaminase (Pseudoalteromonas translucida (strain TAC 125)).